Consider the following 328-residue polypeptide: Spermatogenesis- and oogenesis-specific basic helix-loop-helix-containing protein 1 (328 aa).

The bHLH domain occupies 53–104 (SCLRRNVISERERRKRMSLSCERLRALLPQFDGRREDMASVLEMSVQFLRLA). The disordered stretch occupies residues 290–328 (EAGSALGSDVDDGTSFLLTAGPSSWPGEWGPGFRAGPPA). A compositionally biased stretch (low complexity) spans 310–321 (GPSSWPGEWGPG).

Forms both hetero- and homodimers with SOHLH2.

Its subcellular location is the cytoplasm. It localises to the nucleus. Transcription regulator of both male and female germline differentiation. Suppresses genes involved in spermatogonial stem cells maintenance, and induces genes important for spermatogonial differentiation. Coordinates oocyte differentiation without affecting meiosis I. This Homo sapiens (Human) protein is Spermatogenesis- and oogenesis-specific basic helix-loop-helix-containing protein 1 (SOHLH1).